The chain runs to 378 residues: Isobutylamine N-hydroxylase (378 aa).

As to quaternary structure, exists in dimeric or trimeric form depending upon buffer conditions. It can form an isobutylamine N-hydroxylase two component enzyme system formed of a flavin reductase component (VlmR) and a monooxygenase component (VlmH).

The enzyme catalyses 2-methylpropan-1-amine + FADH2 + O2 = N-(2-methylpropyl)hydroxylamine + FAD + H2O + 2 H(+). It catalyses the reaction 2-methylpropan-1-amine + FMNH2 + O2 = N-(2-methylpropyl)hydroxylamine + FMN + H2O + 2 H(+). With respect to regulation, inhibited by 5',5'-dithio-bis(2-nitrobenzoic acid) (DTNB) and 4-(hydroxymercuri)benzoic acid (p-HMB). Functionally, involved in the biosynthesis of the azoxy antibiotic valanimycin, which has an antitumor activity. Catalyzes the oxidation of isobutylamine to isobutylhydroxylamine via the formation of a flavin 4a-hydroperoxide. Unlike other known N-hydroxylases, isobutylamine N-hydroxylase cannot carry out the reduction of the flavin cofactor and requires the NADPH-flavin oxidoreductase VlmR. Also able to oxidize propan-1-amine, butan-1-amine, butan-2-amine and benzylamine. It has a similar activity with either FMNH(2) or FADH(2). The sequence is that of Isobutylamine N-hydroxylase from Streptomyces viridifaciens.